Consider the following 270-residue polypeptide: Ribonuclease HII (270 aa).

The RNase H type-2 domain maps to 28–222; sequence RQVAGADEAG…VSGRQGAPPR (195 aa). A divalent metal cation-binding residues include Asp34, Glu35, and Asp128.

The protein belongs to the RNase HII family. The cofactor is Mn(2+). Mg(2+) is required as a cofactor.

The protein localises to the cytoplasm. The enzyme catalyses Endonucleolytic cleavage to 5'-phosphomonoester.. Functionally, endonuclease that specifically degrades the RNA of RNA-DNA hybrids. The sequence is that of Ribonuclease HII from Salinispora tropica (strain ATCC BAA-916 / DSM 44818 / JCM 13857 / NBRC 105044 / CNB-440).